A 100-amino-acid chain; its full sequence is Osteocalcin (100 aa).

The signal sequence occupies residues Met1 to Ala23. Residues Lys24–Arg51 constitute a propeptide that is removed on maturation. One can recognise a Gla domain in the interval Tyr52–Gly98. Glu68, Glu72, Glu75, and Asp81 together coordinate Ca(2+). Glu68 bears the 4-carboxyglutamate; partial mark. 4-carboxyglutamate is present on residues Glu72 and Glu75. Cys74 and Cys80 are disulfide-bonded.

This sequence belongs to the osteocalcin/matrix Gla protein family. Post-translationally, gamma-carboxyglutamate residues are formed by vitamin K dependent carboxylation by GGCX. These residues are essential for the binding of calcium. Decarboxylation promotes the hormone activity.

The protein localises to the secreted. In terms of biological role, bone protein that constitutes 1-2% of the total bone protein, and which acts as a negative regulator of bone formation. Functions to limit bone formation without impairing bone resorption or mineralization. It binds strongly to apatite and calcium. Functionally, the uncarboxylated form acts as a hormone secreted by osteoblasts, which regulates different cellular processes, such as energy metabolism, male fertility and brain development. Regulates of energy metabolism by acting as a hormone favoring pancreatic beta-cell proliferation, insulin secretion and sensitivity and energy expenditure. Uncarboxylated osteocalcin hormone also promotes testosterone production in the testes: acts as a ligand for G protein-coupled receptor GPRC6A at the surface of Leydig cells, initiating a signaling response that promotes the expression of enzymes required for testosterone synthesis in a CREB-dependent manner. Also acts as a regulator of brain development: osteocalcin hormone crosses the blood-brain barrier and acts as a ligand for GPR158 on neurons, initiating a signaling response that prevents neuronal apoptosis in the hippocampus, favors the synthesis of all monoamine neurotransmitters and inhibits that of gamma-aminobutyric acid (GABA). Osteocalcin also crosses the placenta during pregnancy and maternal osteocalcin is required for fetal brain development. The chain is Osteocalcin (BGLAP) from Homo sapiens (Human).